We begin with the raw amino-acid sequence, 645 residues long: Octopamine receptor Oamb (645 aa).

At 1–25 (MNETECEDLIKSVKWTEPANLISLA) the chain is on the extracellular side. Asparagine 2 carries N-linked (GlcNAc...) asparagine glycosylation. Residues 26–46 (VLEFINVLVIGGNCLVIAAVF) form a helical membrane-spanning segment. Residues 47–56 (CSNKLRSVTN) lie on the Cytoplasmic side of the membrane. A helical transmembrane segment spans residues 57 to 77 (FFIVNLAVADLLVGLAVLPFS). Residues 78 to 94 (ATWEVFKVWIFGDLWCR) are Extracellular-facing. Cysteine 93 and cysteine 287 are joined by a disulfide. The helical transmembrane segment at 95–115 (IWLAVDVWMCTASILNLCAIS) threads the bilayer. Topologically, residues 116–138 (LDRYVAVTRPVTYPSIMSTKKAK) are cytoplasmic. Residues 139–159 (SLIAGIWVLSFFICFPPLVGW) form a helical membrane-spanning segment. The Extracellular segment spans residues 160 to 295 (KDQKAVIQPT…KCELTNDRGY (136 aa)). Residue asparagine 174 is glycosylated (N-linked (GlcNAc...) asparagine). Residues 190 to 212 (QLGLDSIKDQGEASLPPSPPHIG) form a disordered region. The chain crosses the membrane as a helical span at residues 296–316 (VLYSALGSFYIPMFVMLFFYW). Topologically, residues 317 to 520 (RIYRAAVRTT…FRMETKAAKT (204 aa)) are cytoplasmic. Disordered regions lie at residues 358-386 (GRGS…PSPE) and 479-500 (RQSN…KKMG). Residues 369–385 (SNGSTQSTTTTLGTPSP) are compositionally biased toward low complexity. A helical transmembrane segment spans residues 521 to 541 (LAIIVGMFIFCWCPFFTMYII). Residues 542-551 (RPFCQDCVDP) lie on the Extracellular side of the membrane. Residues 552–572 (LLFSVLFWLGYCNSAVNPMIY) traverse the membrane as a helical segment. The Cytoplasmic portion of the chain corresponds to 573–645 (ALFSKDFRFA…HHSEMSNDPR (73 aa)). Residues 621–645 (TPSAAAHSFGDESELHHSEMSNDPR) are disordered. The span at 629–645 (FGDESELHHSEMSNDPR) shows a compositional bias: basic and acidic residues.

Belongs to the G-protein coupled receptor 1 family. In terms of tissue distribution, highly enriched in mushroom body neuropil and in the ellipsoid body (at protein level). Expressed in oviduct epithelium (at protein level). Expressed in the adult and larval brain, thoracic and abdominal ganglia, terminal cells of the larval tracheal system, muscle, mature eggs and reproductive system.

Its subcellular location is the cell membrane. Its function is as follows. Receptor for octopamine (OA) which is a neurotransmitter, neurohormone and neuromodulator in invertebrates. Stimulates intracellular accumulation of cAMP and Ca(2+) following ligand binding. Required for ovulation. Following activation on mature follicle cells by OA, induces activity of the metalloprotease Mmp2 which leads to breakdown of the posterior follicle wall, resulting in ovulation. Ligand binding probably also leads to activation of CamKII which is also required for ovulation. Modulates sleep/wake behavior by acting in neurons of the pars intercerebralis to promote wakefulness. Plays a role in courtship conditioning where the courtship behavior of males rejected by already mated females is inhibited with further females. Required in the mushroom body for appetitive olfactory learning. Specifically conveys the short-term reinforcing effects of sweet taste. In insulin-producing cells of the brain, plays a role in inhibiting transcription of insulin-like peptide Ilp3. Also plays a role in social behavior by modulating male agression. This Drosophila melanogaster (Fruit fly) protein is Octopamine receptor Oamb.